The chain runs to 286 residues: Protein GrpE (286 aa).

2 disordered regions span residues 1 to 51 and 260 to 286; these read MSED…ETTA and VAAP…QPTT. 2 stretches are compositionally biased toward low complexity: residues 39-50 and 271-286; these read QPSSTPQTPETT and TEST…QPTT.

The protein belongs to the GrpE family. In terms of assembly, homodimer.

The protein localises to the cytoplasm. Its function is as follows. Participates actively in the response to hyperosmotic and heat shock by preventing the aggregation of stress-denatured proteins, in association with DnaK and GrpE. It is the nucleotide exchange factor for DnaK and may function as a thermosensor. Unfolded proteins bind initially to DnaJ; upon interaction with the DnaJ-bound protein, DnaK hydrolyzes its bound ATP, resulting in the formation of a stable complex. GrpE releases ADP from DnaK; ATP binding to DnaK triggers the release of the substrate protein, thus completing the reaction cycle. Several rounds of ATP-dependent interactions between DnaJ, DnaK and GrpE are required for fully efficient folding. The polypeptide is Protein GrpE (Gloeothece citriformis (strain PCC 7424) (Cyanothece sp. (strain PCC 7424))).